The following is a 234-amino-acid chain: Inosine triphosphate pyrophosphatase (234 aa).

Position 11 to 16 (11 to 16 (SGNKGK)) interacts with ITP. A Mg(2+)-binding site is contributed by Glu-40. ITP is bound by residues Lys-53, 81-82 (DT), Lys-98, 176-179 (FGWD), Lys-203, and 208-209 (HR).

The protein belongs to the HAM1 NTPase family. As to quaternary structure, homodimer. Mg(2+) is required as a cofactor. Requires Mn(2+) as cofactor.

The protein resides in the cytoplasm. It carries out the reaction ITP + H2O = IMP + diphosphate + H(+). The enzyme catalyses dITP + H2O = dIMP + diphosphate + H(+). It catalyses the reaction XTP + H2O = XMP + diphosphate + H(+). Its function is as follows. Pyrophosphatase that hydrolyzes non-canonical purine nucleotides such as inosine triphosphate (ITP), deoxyinosine triphosphate (dITP) or xanthosine 5'-triphosphate (XTP) to their respective monophosphate derivatives. The enzyme does not distinguish between the deoxy- and ribose forms. Probably excludes non-canonical purines from RNA and DNA precursor pools, thus preventing their incorporation into RNA and DNA and avoiding chromosomal lesions. This is Inosine triphosphate pyrophosphatase from Leishmania major.